The primary structure comprises 119 residues: Large ribosomal subunit protein bL20 (119 aa).

This sequence belongs to the bacterial ribosomal protein bL20 family.

Its function is as follows. Binds directly to 23S ribosomal RNA and is necessary for the in vitro assembly process of the 50S ribosomal subunit. It is not involved in the protein synthesizing functions of that subunit. The polypeptide is Large ribosomal subunit protein bL20 (Laribacter hongkongensis (strain HLHK9)).